The following is a 296-amino-acid chain: Origin of replication complex subunit 6 (296 aa).

The segment at 212–296 (PSKRKHDDDS…MALEVSSAAN (85 aa)) is disordered. Residues 220-236 (DSDSSGESSGDDQDELD) show a composition bias toward acidic residues. A compositionally biased stretch (polar residues) spans 254–264 (WKSSVLSSNKQ).

It belongs to the ORC6 family. In terms of assembly, component of the origin recognition complex (ORC) composed of at least ORC1, ORC2, ORC3, ORC4, ORC5 and ORC6. ORC is regulated in a cell-cycle and development dependent manner. It is sequentially assembled at the exit from anaphase of mitosis and disassembled as cells enter S phase.

It localises to the nucleus. Its function is as follows. Component of the origin recognition complex (ORC) that binds origins of replication. DNA-binding is ATP-dependent. The specific DNA sequences that define origins of replication have not been identified yet. ORC is required to assemble the pre-replication complex necessary to initiate DNA replication. This is Origin of replication complex subunit 6 from Oryza sativa subsp. indica (Rice).